The following is a 348-amino-acid chain: Trans-L-3-hydroxyproline dehydratase (348 aa).

The active-site Proton acceptor is the cysteine 101. Substrate contacts are provided by residues 102-103, aspartate 263, and 268-269; these read GH and GS.

It belongs to the proline racemase family. In terms of assembly, homodimer.

The enzyme catalyses trans-3-hydroxy-L-proline = 1-pyrroline-2-carboxylate + H2O. Its function is as follows. Catalyzes the dehydration of trans-3-hydroxy-L-proline to delta-1-pyrroline-2-carboxylate (Pyr2C). The polypeptide is Trans-L-3-hydroxyproline dehydratase (l3hypdh) (Xenopus tropicalis (Western clawed frog)).